The sequence spans 226 residues: ATP synthase subunit a (226 aa).

6 helical membrane-spanning segments follow: residues 18–38 (FITGFFVVLTAVLMFLISLGA), 79–99 (LAGTIALYVFFSNMIGIIPGF), 105–125 (SWSFTLVLALIVFFYYHFEGI), 134–154 (FAHFAGPVKWLAPFMFPIEII), 179–199 (LIMLLLVPWAVPVAPFMVLFF), and 201–221 (GILQAFVFMILTYVYLAGAVL).

This sequence belongs to the ATPase A chain family. As to quaternary structure, F-type ATPases have 2 components, CF(1) - the catalytic core - and CF(0) - the membrane proton channel. CF(1) has five subunits: alpha(3), beta(3), gamma(1), delta(1), epsilon(1). CF(0) has three main subunits: a(1), b(2) and c(9-12). The alpha and beta chains form an alternating ring which encloses part of the gamma chain. CF(1) is attached to CF(0) by a central stalk formed by the gamma and epsilon chains, while a peripheral stalk is formed by the delta and b chains.

It is found in the cell inner membrane. Its function is as follows. Key component of the proton channel; it plays a direct role in the translocation of protons across the membrane. This Helicobacter pylori (strain HPAG1) protein is ATP synthase subunit a.